A 128-amino-acid polypeptide reads, in one-letter code: Translation initiation factor 5A (128 aa).

K35 is subject to Hypusine.

Belongs to the eIF-5A family.

It localises to the cytoplasm. Its function is as follows. Functions by promoting the formation of the first peptide bond. The chain is Translation initiation factor 5A (eif5a) from Methanosarcina mazei (strain ATCC BAA-159 / DSM 3647 / Goe1 / Go1 / JCM 11833 / OCM 88) (Methanosarcina frisia).